The sequence spans 589 residues: Complement component C8 beta chain (589 aa).

Residues 1-31 (MKTGAQVWRALAKSCLLCAALGCLHLPGARG) form the signal peptide. The propeptide occupies 32 to 53 (EKPDFFETNAVNGSLVRSRPVR). N43 is a glycosylation site (N-linked (GlcNAc...) asparagine). Residues 63–116 (DCQLSTWSSWTACDPCQKKRYRHTYLLRPSQFYGELCDFSDKEVEDCVTNRACR) form the TSP type-1 1 domain. Intrachain disulfides connect C64–C99, C75–C109, C78–C115, C121–C132, C126–C145, C139–C154, and C161–C199. C-linked (Man) tryptophan glycans are attached at residues W69 and W72. The LDL-receptor class A domain maps to 120–155 (RCEGFVCAQTGRCVNRRLLCNGDNDCGDQSDEANCR). Ca(2+)-binding residues include L137, N140, D142, D144, D150, and E151. The 347-residue stretch at 157 to 503 (IYKKCSQDME…EFQMEVSSCR (347 aa)) folds into the MACPF domain. N-linked (GlcNAc...) asparagine glycosylation is present at N242. A run of 4 beta stranded transmembrane segments spans residues 251–258 (SSFKFGFK), 261–268 (GLVEFGVR), 378–385 (AGGGFQIG), and 391–398 (VYLKLGVS). C377 and C402 are oxidised to a cystine. T417 bears the Phosphothreonine mark. Cystine bridges form between C502-C549, C504-C520, C507-C522, and C524-C533. The EGF-like domain maps to 504 to 534 (CAPCRNNGVPILKESRCECICPAGFQGVACE). In terms of domain architecture, TSP type-1 2 spans 544 to 587 (DGKWSCWSDWSPCSGGRKTRQRQCNNPAPQRGGSPCSGPASETL). Residues W550 and W553 are each glycosylated (C-linked (Man) tryptophan). A disulfide bridge connects residues C556 and C589. A disordered region spans residues 556-589 (CSGGRKTRQRQCNNPAPQRGGSPCSGPASETLDC).

Belongs to the complement C6/C7/C8/C9 family. As to quaternary structure, heterotrimer of 3 chains: alpha (C8A), beta (C8B) and gamma (C8G); the alpha and gamma chains are disulfide bonded. Component of the membrane attack complex (MAC), composed of complement C5b, C6, C7, C8A, C8B, C8G and multiple copies of the pore-forming subunit C9. In terms of processing, N-glycosylated; contains one or two bound glycans. Not O-glycosylated.

It localises to the secreted. Its subcellular location is the target cell membrane. Membrane attack complex (MAC) assembly is inhibited by CD59, thereby protecting self-cells from damage during complement activation. CD59 acts by binding to the beta-haipins of C8 (C8A and C8B), forming an intermolecular beta-sheet that prevents incorporation of the multiple copies of C9 required for complete formation of the osmolytic pore. MAC assembly is also inhibited by clusterin (CLU) chaperones that inhibit polymerization of C9. Functionally, component of the membrane attack complex (MAC), a multiprotein complex activated by the complement cascade, which inserts into a target cell membrane and forms a pore, leading to target cell membrane rupture and cell lysis. The MAC is initiated by proteolytic cleavage of C5 into complement C5b in response to the classical, alternative, lectin and GZMK complement pathways. The complement pathways consist in a cascade of proteins that leads to phagocytosis and breakdown of pathogens and signaling that strengthens the adaptive immune system. C8B, together with C8A and C8G, inserts into the target membrane, but does not form pores by itself. During MAC assembly, associates with C5b, C6 and C7 to form the C5b8 intermediate complex that inserts into the target membrane and traverses the bilayer increasing membrane rigidity. This Rattus norvegicus (Rat) protein is Complement component C8 beta chain (C8b).